Here is a 1073-residue protein sequence, read N- to C-terminus: Probable inorganic carbon transporter subunit DabA (1073 aa).

Zn(2+) contacts are provided by cysteine 551, aspartate 553, histidine 742, and cysteine 757.

This sequence belongs to the inorganic carbon transporter (TC 9.A.2) DabA family. In terms of assembly, forms a complex with DabB. Requires Zn(2+) as cofactor.

It is found in the cell inner membrane. In terms of biological role, part of an energy-coupled inorganic carbon pump. The protein is Probable inorganic carbon transporter subunit DabA of Methylococcus capsulatus (strain ATCC 33009 / NCIMB 11132 / Bath).